The following is a 213-amino-acid chain: Kynurenine formamidase (213 aa).

Position 18 (Trp18) interacts with substrate. 3 residues coordinate Zn(2+): His48, His52, and Asp54. His58 functions as the Proton donor/acceptor in the catalytic mechanism. 2 residues coordinate Zn(2+): His160 and Glu172.

It belongs to the Cyclase 1 superfamily. KynB family. As to quaternary structure, homodimer. Zn(2+) serves as cofactor.

It carries out the reaction N-formyl-L-kynurenine + H2O = L-kynurenine + formate + H(+). It participates in amino-acid degradation; L-tryptophan degradation via kynurenine pathway; L-kynurenine from L-tryptophan: step 2/2. Catalyzes the hydrolysis of N-formyl-L-kynurenine to L-kynurenine, the second step in the kynurenine pathway of tryptophan degradation. The protein is Kynurenine formamidase of Burkholderia pseudomallei (strain 668).